Consider the following 170-residue polypeptide: Ribosome maturation factor RimM (170 aa).

In terms of domain architecture, PRC barrel spans 98 to 170 (EGQYYWADLE…RIELDWDPDF (73 aa)).

The protein belongs to the RimM family. Binds ribosomal protein uS19.

It localises to the cytoplasm. Its function is as follows. An accessory protein needed during the final step in the assembly of 30S ribosomal subunit, possibly for assembly of the head region. Essential for efficient processing of 16S rRNA. May be needed both before and after RbfA during the maturation of 16S rRNA. It has affinity for free ribosomal 30S subunits but not for 70S ribosomes. In Alkalilimnicola ehrlichii (strain ATCC BAA-1101 / DSM 17681 / MLHE-1), this protein is Ribosome maturation factor RimM.